A 233-amino-acid chain; its full sequence is Uridylate kinase (233 aa).

7 to 10 (KISG) contacts ATP. Residue Gly49 coordinates UMP. Residues Gly50 and Arg54 each contribute to the ATP site. UMP is bound by residues Asp68 and 129–136 (TGNPFFTT). Residues Thr156, Tyr162, and Asp165 each contribute to the ATP site.

Belongs to the UMP kinase family. In terms of assembly, homohexamer.

Its subcellular location is the cytoplasm. It carries out the reaction UMP + ATP = UDP + ADP. It functions in the pathway pyrimidine metabolism; CTP biosynthesis via de novo pathway; UDP from UMP (UMPK route): step 1/1. With respect to regulation, inhibited by UTP. Catalyzes the reversible phosphorylation of UMP to UDP. This chain is Uridylate kinase, found in Neorickettsia sennetsu (strain ATCC VR-367 / Miyayama) (Ehrlichia sennetsu).